A 156-amino-acid chain; its full sequence is 6,7-dimethyl-8-ribityllumazine synthase (156 aa).

Residues F22, 57–59 (AYE), and 81–83 (SVI) contribute to the 5-amino-6-(D-ribitylamino)uracil site. Position 86 to 87 (86 to 87 (GT)) interacts with (2S)-2-hydroxy-3-oxobutyl phosphate. H89 serves as the catalytic Proton donor. F114 contacts 5-amino-6-(D-ribitylamino)uracil. A (2S)-2-hydroxy-3-oxobutyl phosphate-binding site is contributed by R128.

This sequence belongs to the DMRL synthase family. As to quaternary structure, forms an icosahedral capsid composed of 60 subunits, arranged as a dodecamer of pentamers.

The enzyme catalyses (2S)-2-hydroxy-3-oxobutyl phosphate + 5-amino-6-(D-ribitylamino)uracil = 6,7-dimethyl-8-(1-D-ribityl)lumazine + phosphate + 2 H2O + H(+). Its pathway is cofactor biosynthesis; riboflavin biosynthesis; riboflavin from 2-hydroxy-3-oxobutyl phosphate and 5-amino-6-(D-ribitylamino)uracil: step 1/2. In terms of biological role, catalyzes the formation of 6,7-dimethyl-8-ribityllumazine by condensation of 5-amino-6-(D-ribitylamino)uracil with 3,4-dihydroxy-2-butanone 4-phosphate. This is the penultimate step in the biosynthesis of riboflavin. This chain is 6,7-dimethyl-8-ribityllumazine synthase, found in Photobacterium leiognathi.